The sequence spans 373 residues: Mitochondrial nicotinamide adenine dinucleotide transporter 1 (373 aa).

The Mitochondrial matrix portion of the chain corresponds to 1–80; it reads MTQTDNPVPN…WVPLSSTQIT (80 aa). Solcar repeat units follow at residues 75-166, 174-263, and 276-364; these read SSTQ…SKKF, FDFV…LKVR, and INLQ…FRNR. The helical transmembrane segment at 81 to 101 threads the bilayer; that stretch reads ALSGAFAGFLSGVAVCPLDVA. The Mitochondrial intermembrane segment spans residues 102-141; that stretch reads KTRLQAQGLQTRFENPYYRGIMGTLSTIVRDEGPRGLYKG. Residues 142 to 162 form a helical membrane-spanning segment; it reads LVPIVLGYFPTWMIYFSVYEF. Residues 163-176 are Mitochondrial matrix-facing; that stretch reads SKKFFHGIFPQFDF. A helical transmembrane segment spans residues 177–199; the sequence is VAQSCAAITAGAASTTLTNPIWV. Residues 200-235 lie on the Mitochondrial intermembrane side of the membrane; sequence VKTRLMLQSNLGEHPTHYKGTFDAFRKLFYQEGFKA. The chain crosses the membrane as a helical span at residues 236-256; sequence LYAGLVPSLLGLFHVAIHFPI. Residues 257-280 lie on the Mitochondrial matrix side of the membrane; that stretch reads YEDLKVRFHCYSRENNTNSINLQR. The helical transmembrane segment at 281–297 threads the bilayer; it reads LIMASSVSKMIASAVTY. Residues 298 to 335 lie on the Mitochondrial intermembrane side of the membrane; it reads PHEILRTRMQLKSDIPDSIQRRLFPLIKATYAQEGLKG. Residues 336–358 traverse the membrane as a helical segment; that stretch reads FYSGFTTNLVRTIPASAITLVSF. Residues 359–373 lie on the Mitochondrial matrix side of the membrane; it reads EYFRNRLENISTMVI.

This sequence belongs to the mitochondrial carrier (TC 2.A.29) family.

It is found in the mitochondrion inner membrane. The enzyme catalyses dAMP(in) + NAD(+)(out) = dAMP(out) + NAD(+)(in). The catalysed reaction is dGMP(in) + NAD(+)(out) = dGMP(out) + NAD(+)(in). It carries out the reaction GMP(in) + NAD(+)(out) = GMP(out) + NAD(+)(in). It catalyses the reaction AMP(in) + NAD(+)(out) = AMP(out) + NAD(+)(in). The enzyme catalyses deamido-NAD(+)(in) + NAD(+)(out) = deamido-NAD(+)(out) + NAD(+)(in). In terms of biological role, mitochondrial inner membrane carrier protein that mediates the import of NAD(+) into mitochondria. Can transport NAD(+) by unidirectional transport or by exchange with intramitochondrially generated dAMP and dGMP. Also able to transport NAD(+) by exchange with AMP, GMP or deamido-NAD (+) in vitro. This chain is Mitochondrial nicotinamide adenine dinucleotide transporter 1 (YIA6), found in Saccharomyces cerevisiae (strain ATCC 204508 / S288c) (Baker's yeast).